Reading from the N-terminus, the 621-residue chain is Glutamyl-tRNA(Gln) amidotransferase subunit B, mitochondrial (621 aa).

A mitochondrion-targeting transit peptide spans 1 to 41 (MARLPTTELRKYLLTGQFTRRGCLHLRPSPLAPPIPPLRTL). Disordered stretches follow at residues 26-86 (LRPS…DNQT) and 106-136 (SKLFSPASTPSSSSDDAVHHHHPNTHVAPFD). Composition is skewed to low complexity over residues 38–57 (LRTLSTTPPTPSDQQPQIIP) and 110–120 (SPASTPSSSSD).

This sequence belongs to the GatB/GatE family. GatB subfamily. In terms of assembly, subunit of the heterotrimeric GatCAB amidotransferase (AdT) complex, composed of A, B and C subunits.

The protein localises to the mitochondrion. The enzyme catalyses L-glutamyl-tRNA(Gln) + L-glutamine + ATP + H2O = L-glutaminyl-tRNA(Gln) + L-glutamate + ADP + phosphate + H(+). In terms of biological role, allows the formation of correctly charged Gln-tRNA(Gln) through the transamidation of misacylated Glu-tRNA(Gln) in the mitochondria. The reaction takes place in the presence of glutamine and ATP through an activated gamma-phospho-Glu-tRNA(Gln). This Podospora anserina (strain S / ATCC MYA-4624 / DSM 980 / FGSC 10383) (Pleurage anserina) protein is Glutamyl-tRNA(Gln) amidotransferase subunit B, mitochondrial.